The primary structure comprises 183 residues: Endoribonuclease YbeY (183 aa).

3 residues coordinate Zn(2+): H118, H122, and H128. Residues 156-183 form a disordered region; sequence EREQAQRSADSAVLGAVGLEEQDGPGTH.

The protein belongs to the endoribonuclease YbeY family. Zn(2+) serves as cofactor.

It is found in the cytoplasm. Its function is as follows. Single strand-specific metallo-endoribonuclease involved in late-stage 70S ribosome quality control and in maturation of the 3' terminus of the 16S rRNA. This chain is Endoribonuclease YbeY, found in Saccharopolyspora erythraea (strain ATCC 11635 / DSM 40517 / JCM 4748 / NBRC 13426 / NCIMB 8594 / NRRL 2338).